Reading from the N-terminus, the 351-residue chain is Probable minor fimbrial subunit LpfD (351 aa).

The signal sequence occupies residues Met-1–Ala-22.

The protein belongs to the fimbrial protein family.

It is found in the fimbrium. Its function is as follows. Part of the lpfABCC'DE fimbrial operon. LP fimbriae may participate in the interaction with eukaryotic cells by assisting in microcolony formation. The sequence is that of Probable minor fimbrial subunit LpfD (lpfD) from Escherichia coli O157:H7.